The primary structure comprises 2153 residues: RNA-directed RNA polymerase L (2153 aa).

Mn(2+) is bound by residues His36, Glu54, Asp97, Glu110, and Val111. Lys124 functions as the For endonuclease activity in the catalytic mechanism. In terms of domain architecture, RdRp catalytic spans 957–1143 (TGKKIRFKRK…AVNQEMWKSM (187 aa)). Mg(2+) is bound at residue Asp1100.

The protein belongs to the Bunyavirales RNA polymerase family. In terms of assembly, interacts with the viral nucleoprotein. Mn(2+) serves as cofactor. Mg(2+) is required as a cofactor.

Its subcellular location is the host cytoplasm. The protein resides in the host perinuclear region. It carries out the reaction RNA(n) + a ribonucleoside 5'-triphosphate = RNA(n+1) + diphosphate. Functionally, RNA-dependent RNA polymerase, which is responsible for the replication and transcription of the viral RNA genome using antigenomic RNA as an intermediate. During transcription, synthesizes subgenomic RNAs and assures their capping by a cap-snatching mechanism, which involves the endonuclease activity cleaving the host capped pre-mRNAs. These short capped RNAs are then used as primers for viral transcription. Cleaves ssRNA substrates but not DNA. Seems to downregulate the expression of its own and heterologous mRNAs through its endonuclease activity. This Black Creek Canal orthohantavirus (BCCV) protein is RNA-directed RNA polymerase L.